The following is a 689-amino-acid chain: Glycine--tRNA ligase beta subunit (689 aa).

The protein belongs to the class-II aminoacyl-tRNA synthetase family. As to quaternary structure, tetramer of two alpha and two beta subunits.

It is found in the cytoplasm. It carries out the reaction tRNA(Gly) + glycine + ATP = glycyl-tRNA(Gly) + AMP + diphosphate. In Salmonella schwarzengrund (strain CVM19633), this protein is Glycine--tRNA ligase beta subunit.